Consider the following 1106-residue polypeptide: Communication mutant protein F (1106 aa).

A signal peptide spans 1–28 (MKIYKKNHFLKILIIFIYLSCNILKVNA). The G8 domain maps to 254-380 (TIWPNGVVPS…YHNTWSKLAS (127 aa)). N267, N306, N512, N536, N677, N715, and N833 each carry an N-linked (GlcNAc...) asparagine glycan.

The protein belongs to the comF family.

The protein resides in the secreted. The protein is Communication mutant protein F (comF-1) of Dictyostelium discoideum (Social amoeba).